A 320-amino-acid polypeptide reads, in one-letter code: Nucleotide-binding protein Psyc_0118 (320 aa).

ATP is bound at residue 32–39 (GRSGSGKT). 82 to 85 (DIRT) provides a ligand contact to GTP.

The protein belongs to the RapZ-like family.

Functionally, displays ATPase and GTPase activities. The protein is Nucleotide-binding protein Psyc_0118 of Psychrobacter arcticus (strain DSM 17307 / VKM B-2377 / 273-4).